The following is a 294-amino-acid chain: Phosphate acetyltransferase (294 aa).

It belongs to the phosphate acetyltransferase and butyryltransferase family. Homotetramer.

The protein localises to the cytoplasm. The catalysed reaction is acetyl-CoA + phosphate = acetyl phosphate + CoA. It functions in the pathway metabolic intermediate biosynthesis; acetyl-CoA biosynthesis; acetyl-CoA from acetate: step 2/2. In terms of biological role, in addition to acetyl-CoA (100%), the enzyme accepts propionyl-CoA (60%) and butyryl-CoA (30%). This chain is Phosphate acetyltransferase (pta), found in Thermotoga maritima (strain ATCC 43589 / DSM 3109 / JCM 10099 / NBRC 100826 / MSB8).